We begin with the raw amino-acid sequence, 492 residues long: MTTTENSLMPDVRNGIDFKVADLSLANFGRKELDLAEYEMPGLMSLRHEYAEVQPLKGARISGSLHMTVQTAVLIETLTALGAEVRWASCNIFSTQDHAAAAVVVGPYGTPEEPKGVPVFAWKGETLEEYWWAAEQMLTWPDPDKPVNMILDDGGDATMLVLRGVQYEKAGVVPPAEVDDSAEWKVFLNLLRKRFETDKGKWTKIAKSVKGVTEETTTGVLRLYQFAAAGDLAFPAINVNDSVTKSKFDNKYGTRHSLIDGINRGTDSLIGGKNVLICGYGDVGKGCAEAAKGQGARVTITEIDPINALQALMEGFDVKRVEDVIADSDIVVTATGNKDIILLEHMKAMKDHAILGNIGHFDNEIDMAALERSGATRLNIKPQVDLWTFGDSGKSIIVLSEGRLLNLGNATGHPSFVMSNSFANQTIAQIELWTKNDDYDNEVYRLPKHLDEKVARVHVEALGGQLTKLTKDQAEYLGVDVDGPFKPDHYRY.

Positions 68, 153, and 215 each coordinate substrate. Residue 216-218 participates in NAD(+) binding; that stretch reads TTT. The substrate site is built by lysine 245 and aspartate 249. NAD(+)-binding positions include asparagine 250, 279 to 284, glutamate 302, asparagine 337, 358 to 360, and asparagine 406; these read GYGDVG and IGH.

This sequence belongs to the adenosylhomocysteinase family. The cofactor is NAD(+).

Its subcellular location is the cytoplasm. The catalysed reaction is S-adenosyl-L-homocysteine + H2O = L-homocysteine + adenosine. The protein operates within amino-acid biosynthesis; L-homocysteine biosynthesis; L-homocysteine from S-adenosyl-L-homocysteine: step 1/1. Its function is as follows. May play a key role in the regulation of the intracellular concentration of adenosylhomocysteine. In Mycobacterium leprae (strain Br4923), this protein is Adenosylhomocysteinase.